Here is a 429-residue protein sequence, read N- to C-terminus: MADVVLGSQWGDEGKGKLVDILCDQIDVCARCQGGNNAGHTIVVGDVKYDFHMLPSGLVNPNCQNLLGSGVVIHVPSFFDELKAIEDKGLNCRDRLFVSSRCHLVFDFHQLTDGLKEQELSTTKKAIGTTGKGIGPTYSTKASRSGIRVHHLVSQEPGAWEEFESRLRRLVGTRQKRYGDFDYDVEEEIKRYKKLADDLRPFVIDAVPFMHKAIKANKRILIEGANALMLDLDFGTYPYVTSSNTGIGGVCTGLGIPPTAIRNIYGVVKAYTTRVGAGPFPTEQLNNVGEHLQEVGAEFGVTTGRRRRCGWLDLVVLQYSTWINGYTSLNITKLDVLDQLEELKVAVGYKHNGKVLESFPEDLHVLEQVECIYETLPGWKSDTTKITEYAELPENAKKYIAFIEKFLDCPVQWVGVGPGRSHMLSKSVN.

GTP contacts are provided by residues 11–17 (GDEGKGK) and 39–41 (GHT). D12 serves as the catalytic Proton acceptor. Residues D12 and G39 each contribute to the Mg(2+) site. Residues 12–15 (DEGK), 37–40 (NAGH), T130, R144, N226, T241, and R305 contribute to the IMP site. Catalysis depends on H40, which acts as the Proton donor. Substrate is bound at residue 301-307 (VTTGRRR). Residues R307, 333–335 (KLD), and 415–417 (GVG) contribute to the GTP site.

The protein belongs to the adenylosuccinate synthetase family. In terms of assembly, homodimer. Mg(2+) serves as cofactor.

Its subcellular location is the cytoplasm. The enzyme catalyses IMP + L-aspartate + GTP = N(6)-(1,2-dicarboxyethyl)-AMP + GDP + phosphate + 2 H(+). The protein operates within purine metabolism; AMP biosynthesis via de novo pathway; AMP from IMP: step 1/2. Its function is as follows. Plays an important role in the de novo pathway and in the salvage pathway of purine nucleotide biosynthesis. Catalyzes the first committed step in the biosynthesis of AMP from IMP. The sequence is that of Adenylosuccinate synthetase from Yarrowia lipolytica (strain CLIB 122 / E 150) (Yeast).